Reading from the N-terminus, the 201-residue chain is Ribosomal RNA large subunit methyltransferase E (201 aa).

Positions 49, 51, 69, 90, and 113 each coordinate S-adenosyl-L-methionine. Lys-153 serves as the catalytic Proton acceptor.

It belongs to the class I-like SAM-binding methyltransferase superfamily. RNA methyltransferase RlmE family.

Its subcellular location is the cytoplasm. It carries out the reaction uridine(2552) in 23S rRNA + S-adenosyl-L-methionine = 2'-O-methyluridine(2552) in 23S rRNA + S-adenosyl-L-homocysteine + H(+). In terms of biological role, specifically methylates the uridine in position 2552 of 23S rRNA at the 2'-O position of the ribose in the fully assembled 50S ribosomal subunit. The protein is Ribosomal RNA large subunit methyltransferase E of Desulfotalea psychrophila (strain LSv54 / DSM 12343).